Reading from the N-terminus, the 534-residue chain is Cytidylyl-2-hydroxyethylphosphonate methyltransferase (534 aa).

Residues 38–195 (KVLLLNPSAT…EHLNGNVSDD (158 aa)) enclose the B12-binding domain. The Radical SAM core domain maps to 268 to 496 (TVGSRVGQLY…TYKQGIINVP (229 aa)). [4Fe-4S] cluster is bound by residues C282, C286, and C289.

The protein belongs to the radical SAM superfamily. [4Fe-4S] cluster is required as a cofactor. Methylcob(III)alamin serves as cofactor.

The catalysed reaction is cytidine 5'-{[hydroxy(2-hydroxyethyl)phosphonoyl]phosphate} + AH2 + 2 S-adenosyl-L-methionine = cytidine 5'-({hydroxy[(S)-2-hydroxypropyl]phosphonoyl}phosphate) + 5'-deoxyadenosine + L-methionine + A + S-adenosyl-L-homocysteine + 2 H(+). The protein operates within antibiotic biosynthesis; fosfomycin biosynthesis. Its function is as follows. Involved in fosfomycin biosynthesis. Catalyzes the C-methylation of cytidylyl-2-hydroxyethylphosphonate (HEP-CMP) to form cytidylyl-2-hydroxypropylphosphonate (HPP-CMP). The C-methylation is not stereoselective and the ratio of (S)- to (R)-HPP-CMP is almost equal in vitro. This Streptomyces wedmorensis protein is Cytidylyl-2-hydroxyethylphosphonate methyltransferase.